The sequence spans 249 residues: L-fucose operon activator (249 aa).

The region spanning 1–56 (MNYRDELILQWVNQQGKASVIELAQHCDISVETIRRDLNKLANKGLLHRTHGGAVS) is the HTH deoR-type domain. The H-T-H motif DNA-binding region spans 18 to 37 (ASVIELAQHCDISVETIRRD).

Transcriptional activator of the fuc operon. This chain is L-fucose operon activator (fucR), found in Haemophilus influenzae (strain ATCC 51907 / DSM 11121 / KW20 / Rd).